We begin with the raw amino-acid sequence, 320 residues long: Mitochondrial thiamine pyrophosphate carrier (320 aa).

Solcar repeat units follow at residues 13–106 (NTKF…LTEL), 116–202 (REFS…LKHL), and 214–309 (NENL…FCNV). A helical transmembrane segment spans residues 19–39 (AVAGSVSGLVTRALISPFDVI). Serine 51 is modified (phosphoserine). Helical transmembrane passes span 87–107 (ILSI…TELV), 122–142 (FVCG…VDVL), 173–193 (VFYK…GLQF), and 220–240 (LLCG…LDLF). The Substrate recognition motif lies at 241 to 246 (KKRLQV). The helical transmembrane segment at 293 to 313 (ALSTGFMFFWYEFFCNVFHCM) threads the bilayer.

Belongs to the mitochondrial carrier (TC 2.A.29) family.

The protein localises to the mitochondrion membrane. The enzyme catalyses thiamine phosphate(out) + thiamine diphosphate(in) = thiamine phosphate(in) + thiamine diphosphate(out). Mitochondrial transporter mediating uptake of thiamine diphosphate into mitochondria. It is not clear if the antiporter activity is affected by the membrane potential or by the proton electrochemical gradient. The sequence is that of Mitochondrial thiamine pyrophosphate carrier (SLC25A19) from Pongo abelii (Sumatran orangutan).